Consider the following 616-residue polypeptide: MPKYRSATTTHGRNMAGARALWRATGMTDSDFGKPIIAVVNSFTQFVPGHVHLRDLGKLVAEQIEASGGVAKEFNTIAVDDGIAMGHGGMLYSLPSRELIADSVEYMVNAHCADAMVCISNCDKITPGMLMASLRLNIPVIFVSGGPMEAGKTKLSDKIIKLDLVDAMIQGADPKVSDDQSNQVERSACPTCGSCSGMFTANSMNCLTEALGLSQPGNGSLLATHADRKQLFLNAGKRIVELTKRYYEQNDESALPRNIASKAAFENAMTLDIAMGGSTNTVLHLLAAAQEAEIDFTMSDIDKLSRKVPQLCKVAPSTQKYHMEDVHRAGGVLGILGELDRAGLLNRNVKNVLGLTLPQTLEQYDITVTQDEAVKKMFRAGPAGIRTTQAFSQDCRWDSLDDDRAAGCIRSLEYAYSKDGGLAVLYGNFAENGCIVKTAGVDDSILKFTGPAKVYESQDEAVEAILGGKVVEGDVVVIRYEGPKGGPGMQEMLYPTSFLKSMGLGKACALITDGRFSGGTSGLSIGHVSPEAASGGTIALIEDGDTIAIDIPNRSIQLQLSEAEIAARREAQEARGDKAWTPKNRQRQVSFALRAYASLATSADKGAVRDKSKLGG.

Asp-81 provides a ligand contact to Mg(2+). Cys-122 provides a ligand contact to [2Fe-2S] cluster. 2 residues coordinate Mg(2+): Asp-123 and Lys-124. Position 124 is an N6-carboxylysine (Lys-124). Cys-195 serves as a coordination point for [2Fe-2S] cluster. Glu-491 provides a ligand contact to Mg(2+). The Proton acceptor role is filled by Ser-517.

Belongs to the IlvD/Edd family. Homodimer. The cofactor is [2Fe-2S] cluster. Requires Mg(2+) as cofactor.

The enzyme catalyses (2R)-2,3-dihydroxy-3-methylbutanoate = 3-methyl-2-oxobutanoate + H2O. It carries out the reaction (2R,3R)-2,3-dihydroxy-3-methylpentanoate = (S)-3-methyl-2-oxopentanoate + H2O. The protein operates within amino-acid biosynthesis; L-isoleucine biosynthesis; L-isoleucine from 2-oxobutanoate: step 3/4. It participates in amino-acid biosynthesis; L-valine biosynthesis; L-valine from pyruvate: step 3/4. Functions in the biosynthesis of branched-chain amino acids. Catalyzes the dehydration of (2R,3R)-2,3-dihydroxy-3-methylpentanoate (2,3-dihydroxy-3-methylvalerate) into 2-oxo-3-methylpentanoate (2-oxo-3-methylvalerate) and of (2R)-2,3-dihydroxy-3-methylbutanoate (2,3-dihydroxyisovalerate) into 2-oxo-3-methylbutanoate (2-oxoisovalerate), the penultimate precursor to L-isoleucine and L-valine, respectively. The chain is Dihydroxy-acid dehydratase from Salmonella newport (strain SL254).